The following is an 895-amino-acid chain: MNCLANESLNSLKISPFSTSRLLSSVTNFRNQLSFSSKDSSSSSAPFNPFRFFNDQSNSRLCNLRTTKILQAHLLRRYLLPFDVFLTKSLLSWYSNSGSMADAAKLFDTIPQPDVVSCNIMISGYKQHRLFEESLRFFSKMHFLGFEANEISYGSVISACSALQAPLFSELVCCHTIKMGYFFYEVVESALIDVFSKNLRFEDAYKVFRDSLSANVYCWNTIIAGALRNQNYGAVFDLFHEMCVGFQKPDSYTYSSVLAACASLEKLRFGKVVQARVIKCGAEDVFVCTAIVDLYAKCGHMAEAMEVFSRIPNPSVVSWTVMLSGYTKSNDAFSALEIFKEMRHSGVEINNCTVTSVISACGRPSMVCEASQVHAWVFKSGFYLDSSVAAALISMYSKSGDIDLSEQVFEDLDDIQRQNIVNVMITSFSQSKKPGKAIRLFTRMLQEGLRTDEFSVCSLLSVLDCLNLGKQVHGYTLKSGLVLDLTVGSSLFTLYSKCGSLEESYKLFQGIPFKDNACWASMISGFNEYGYLREAIGLFSEMLDDGTSPDESTLAAVLTVCSSHPSLPRGKEIHGYTLRAGIDKGMDLGSALVNMYSKCGSLKLARQVYDRLPELDPVSCSSLISGYSQHGLIQDGFLLFRDMVMSGFTMDSFAISSILKAAALSDESSLGAQVHAYITKIGLCTEPSVGSSLLTMYSKFGSIDDCCKAFSQINGPDLIAWTALIASYAQHGKANEALQVYNLMKEKGFKPDKVTFVGVLSACSHGGLVEESYFHLNSMVKDYGIEPENRHYVCMVDALGRSGRLREAESFINNMHIKPDALVWGTLLAACKIHGEVELGKVAAKKAIELEPSDAGAYISLSNILAEVGEWDEVEETRKLMKGTGVQKEPGWSSV.

Residues 1-71 (MNCLANESLN…CNLRTTKILQ (71 aa)) constitute a chloroplast transit peptide. 22 PPR repeats span residues 83 to 113 (DVFL…IPQP), 114 to 148 (DVVS…GFEA), 149 to 183 (NEIS…GYFF), 184 to 214 (YEVV…SLSA), 215 to 249 (NVYC…FQKP), 250 to 280 (DSYT…VIKC), 284 to 314 (DVFV…IPNP), 315 to 349 (SVVS…GVEI), 350 to 384 (NNCT…GFYL), 385 to 415 (DSSV…LDDI), 417 to 451 (RQNI…GLRT), 452 to 483 (DEFS…GLVL), 484 to 514 (DLTV…IPFK), 515 to 549 (DNAC…GTSP), 550 to 584 (DEST…GIDK), 585 to 615 (GMDL…LPEL), 616 to 650 (DPVS…GFTM), 651 to 685 (DSFA…GLCT), 686 to 716 (EPSV…INGP), 717 to 751 (DLIA…GFKP), 752 to 787 (DKVT…GIEP), and 788 to 818 (ENRH…MHIK). The segment at 824-895 (WGTLLAACKI…VQKEPGWSSV (72 aa)) is type E motif; degenerate.

It belongs to the PPR family. PCMP-E subfamily.

The protein resides in the plastid. Its subcellular location is the chloroplast. In Arabidopsis thaliana (Mouse-ear cress), this protein is Pentatricopeptide repeat-containing protein At1g74600, chloroplastic (PCMP-E69).